A 229-amino-acid polypeptide reads, in one-letter code: Large ribosomal subunit protein uL1 (229 aa).

The protein belongs to the universal ribosomal protein uL1 family. As to quaternary structure, part of the 50S ribosomal subunit.

Binds directly to 23S rRNA. The L1 stalk is quite mobile in the ribosome, and is involved in E site tRNA release. Its function is as follows. Protein L1 is also a translational repressor protein, it controls the translation of the L11 operon by binding to its mRNA. The polypeptide is Large ribosomal subunit protein uL1 (Leifsonia xyli subsp. xyli (strain CTCB07)).